A 59-amino-acid polypeptide reads, in one-letter code: Large ribosomal subunit protein bL32 (59 aa).

The disordered stretch occupies residues M1–E59. Positions R49–E59 are enriched in basic residues.

This sequence belongs to the bacterial ribosomal protein bL32 family.

The polypeptide is Large ribosomal subunit protein bL32 (Dechloromonas aromatica (strain RCB)).